We begin with the raw amino-acid sequence, 162 residues long: MAELIIVYFSSKSNNTHRFVQKLGLPAQRIPVDNRPLEVSTHYLLIVPTYAAGGSDAKGAVPKQVIRFLNNPNNRKHCKGVISSGNTNFGDTFALAGPIISQKLQVPLLHQFELLGTATDVKKVQAIFARLKHHTHDKQKQINNLITERTHPCHKPMRHTSH.

Belongs to the NrdI family.

Functionally, probably involved in ribonucleotide reductase function. This chain is Protein NrdI, found in Streptococcus pyogenes serotype M28 (strain MGAS6180).